A 121-amino-acid polypeptide reads, in one-letter code: Auxin-responsive protein SAUR32 (121 aa).

It belongs to the ARG7 family. Expressed in roots, leaves and stems.

It localises to the nucleus. The protein resides in the cytoplasm. May play a role in the apical hook development. This Arabidopsis thaliana (Mouse-ear cress) protein is Auxin-responsive protein SAUR32.